A 331-amino-acid chain; its full sequence is Neuropeptides B/W receptor type 1 (331 aa).

Over 1–43 (MHNASYWGPERANTSCPAPAPTLGCPNASGPAPPLPPPLAVAV) the chain is Extracellular. N3, N13, and N27 each carry an N-linked (GlcNAc...) asparagine glycan. Residues 44-66 (PVVYAVICAVGLAGNSAVLFVLL) form a helical membrane-spanning segment. The Cytoplasmic portion of the chain corresponds to 67–75 (RAPRRKTVT). A helical transmembrane segment spans residues 76-100 (NLFILNLAVADELFTLVPPVNIADF). Residues 101–115 (LLRRWPFGELLCKLV) lie on the Extracellular side of the membrane. A disulfide bond links C112 and C191. Residues 116 to 135 (VAVDQYNTFSSLYFLTVMSA) form a helical membrane-spanning segment. At 136 to 160 (DRYLVVLATAESRRVAGRTYGAARA) the chain is on the cytoplasmic side. The chain crosses the membrane as a helical span at residues 161 to 180 (VSLAVWGVATLVVLPFAVFA). The Extracellular portion of the chain corresponds to 181 to 205 (RLDEEQGRRQCVLVFPQPEALWWRA). Residues 206 to 227 (SRLYTLVLGFAIPVSTICVLYT) form a helical membrane-spanning segment. Residues 228–251 (SLLCRLRAIRLDSHAKALDRAKKR) lie on the Cytoplasmic side of the membrane. The helical transmembrane segment at 252–276 (VTVLVVAILAVCLLVWTPYHLSTVV) threads the bilayer. Residues 277–286 (ALTTDLPQTP) are Extracellular-facing. Residues 287 to 301 (LVIAVSYFITSLSYA) form a helical membrane-spanning segment. Topologically, residues 302-331 (NSCLNPFLYAFLDDSFRRSLRQLLACRTTS) are cytoplasmic.

This sequence belongs to the G-protein coupled receptor 1 family.

Its subcellular location is the cell membrane. Its function is as follows. Interacts specifically with a number of opioid ligands. Receptor for neuropeptides B and W, which may be involved in neuroendocrine system regulation, food intake and the organization of other signals. In Bos taurus (Bovine), this protein is Neuropeptides B/W receptor type 1 (NPBWR1).